The following is a 243-amino-acid chain: 2-C-methyl-D-erythritol 4-phosphate cytidylyltransferase (243 aa).

Belongs to the IspD/TarI cytidylyltransferase family. IspD subfamily. In terms of assembly, homodimer.

It carries out the reaction 2-C-methyl-D-erythritol 4-phosphate + CTP + H(+) = 4-CDP-2-C-methyl-D-erythritol + diphosphate. It participates in isoprenoid biosynthesis; isopentenyl diphosphate biosynthesis via DXP pathway; isopentenyl diphosphate from 1-deoxy-D-xylulose 5-phosphate: step 2/6. Its function is as follows. Catalyzes the formation of 4-diphosphocytidyl-2-C-methyl-D-erythritol from CTP and 2-C-methyl-D-erythritol 4-phosphate (MEP). The chain is 2-C-methyl-D-erythritol 4-phosphate cytidylyltransferase from Photorhabdus laumondii subsp. laumondii (strain DSM 15139 / CIP 105565 / TT01) (Photorhabdus luminescens subsp. laumondii).